We begin with the raw amino-acid sequence, 343 residues long: NADH-quinone oxidoreductase subunit H (343 aa).

8 consecutive transmembrane segments (helical) span residues 21–41 (WTLVWTILKIAVLIAPILFCV), 95–115 (FILAPILTFSTALVSWAVVPF), 124–144 (VNVGVLFILAMSSLGAYGVLL), 172–192 (MGFTLVPVIMLSGSLNLGDIV), 197–217 (GLWYALPLLPGFFIYFISVVA), 257–277 (IIMVSVLGSLMFLGGWLPPIE), 281–301 (FIPGIVWLILKTGVLIFFFLW), and 317–337 (LGWKVFLPISLAWIFIVGLAM).

It belongs to the complex I subunit 1 family. NDH-1 is composed of 14 different subunits. Subunits NuoA, H, J, K, L, M, N constitute the membrane sector of the complex.

The protein localises to the cell inner membrane. The enzyme catalyses a quinone + NADH + 5 H(+)(in) = a quinol + NAD(+) + 4 H(+)(out). In terms of biological role, NDH-1 shuttles electrons from NADH, via FMN and iron-sulfur (Fe-S) centers, to quinones in the respiratory chain. The immediate electron acceptor for the enzyme in this species is believed to be ubiquinone. Couples the redox reaction to proton translocation (for every two electrons transferred, four hydrogen ions are translocated across the cytoplasmic membrane), and thus conserves the redox energy in a proton gradient. This subunit may bind ubiquinone. In Magnetococcus marinus (strain ATCC BAA-1437 / JCM 17883 / MC-1), this protein is NADH-quinone oxidoreductase subunit H.